The sequence spans 217 residues: Adenylate kinase (217 aa).

10–15 contacts ATP; the sequence is GAGKGT. The tract at residues 30–59 is NMP; it reads STGDIFRAAMKNETPMGIEAKKYIDKGELV. Residues T31, R36, 57–59, 85–88, and Q92 each bind AMP; these read ELV and GFPR. Residues 126 to 164 are LID; sequence GRFICRNCGATYHKLYNAPKVEGTCDVCGHHEFYQRDDD. ATP is bound at residue R127. The Zn(2+) site is built by C130 and C133. Residue 136-137 coordinates ATP; that stretch reads TY. Zn(2+)-binding residues include C150 and C153. The AMP site is built by R161 and R172. An ATP-binding site is contributed by Q200.

The protein belongs to the adenylate kinase family. Monomer.

It localises to the cytoplasm. The catalysed reaction is AMP + ATP = 2 ADP. It participates in purine metabolism; AMP biosynthesis via salvage pathway; AMP from ADP: step 1/1. In terms of biological role, catalyzes the reversible transfer of the terminal phosphate group between ATP and AMP. Plays an important role in cellular energy homeostasis and in adenine nucleotide metabolism. The polypeptide is Adenylate kinase (Limosilactobacillus reuteri subsp. reuteri (strain JCM 1112) (Lactobacillus reuteri)).